A 149-amino-acid polypeptide reads, in one-letter code: Inner membrane protein YfeZ (149 aa).

At M1–R18 the chain is on the cytoplasmic side. The helical transmembrane segment at L19–I39 threads the bilayer. Topologically, residues A40 to H58 are periplasmic. Residues D59–G79 form a helical membrane-spanning segment. Topologically, residues R80–R89 are cytoplasmic. Residues V90–W110 traverse the membrane as a helical segment. At L111–S115 the chain is on the periplasmic side. A helical membrane pass occupies residues V116–T136. Over N137–E149 the chain is Cytoplasmic.

It is found in the cell inner membrane. The chain is Inner membrane protein YfeZ (yfeZ) from Escherichia coli (strain K12).